The sequence spans 190 residues: Threonylcarbamoyl-AMP synthase (190 aa).

One can recognise a YrdC-like domain in the interval 7 to 190; that stretch reads GDAIAAAIDV…ALTGELFRQG (184 aa).

The protein belongs to the SUA5 family. TsaC subfamily.

It is found in the cytoplasm. The catalysed reaction is L-threonine + hydrogencarbonate + ATP = L-threonylcarbamoyladenylate + diphosphate + H2O. In terms of biological role, required for the formation of a threonylcarbamoyl group on adenosine at position 37 (t(6)A37) in tRNAs that read codons beginning with adenine. Catalyzes the conversion of L-threonine, HCO(3)(-)/CO(2) and ATP to give threonylcarbamoyl-AMP (TC-AMP) as the acyladenylate intermediate, with the release of diphosphate. The protein is Threonylcarbamoyl-AMP synthase of Escherichia coli O1:K1 / APEC.